The primary structure comprises 178 residues: Protein GrpE (178 aa).

The tract at residues 1–26 is disordered; that stretch reads MQDQDKYAEQAASMEEPASADAPAIV.

This sequence belongs to the GrpE family. In terms of assembly, homodimer.

It localises to the cytoplasm. In terms of biological role, participates actively in the response to hyperosmotic and heat shock by preventing the aggregation of stress-denatured proteins, in association with DnaK and GrpE. It is the nucleotide exchange factor for DnaK and may function as a thermosensor. Unfolded proteins bind initially to DnaJ; upon interaction with the DnaJ-bound protein, DnaK hydrolyzes its bound ATP, resulting in the formation of a stable complex. GrpE releases ADP from DnaK; ATP binding to DnaK triggers the release of the substrate protein, thus completing the reaction cycle. Several rounds of ATP-dependent interactions between DnaJ, DnaK and GrpE are required for fully efficient folding. The protein is Protein GrpE of Herminiimonas arsenicoxydans.